The following is a 214-amino-acid chain: Probable transaldolase (214 aa).

K83 functions as the Schiff-base intermediate with substrate in the catalytic mechanism.

The protein belongs to the transaldolase family. Type 3B subfamily.

It is found in the cytoplasm. It catalyses the reaction D-sedoheptulose 7-phosphate + D-glyceraldehyde 3-phosphate = D-erythrose 4-phosphate + beta-D-fructose 6-phosphate. The protein operates within carbohydrate degradation; pentose phosphate pathway; D-glyceraldehyde 3-phosphate and beta-D-fructose 6-phosphate from D-ribose 5-phosphate and D-xylulose 5-phosphate (non-oxidative stage): step 2/3. Functionally, transaldolase is important for the balance of metabolites in the pentose-phosphate pathway. The polypeptide is Probable transaldolase (Streptococcus equi subsp. zooepidemicus (strain H70)).